The chain runs to 744 residues: Catalase A (744 aa).

Residues H93 and N166 contribute to the active site. Heme is bound at residue Y380.

The protein belongs to the catalase family. Requires heme as cofactor.

The protein resides in the peroxisome matrix. The enzyme catalyses 2 H2O2 = O2 + 2 H2O. Functionally, catalyzes the degradation of hydrogen peroxide (H(2)O(2)) generated by peroxisomal oxidases to water and oxygen, thereby protecting cells from the toxic effects of hydrogen peroxide. The protein is Catalase A (catA) of Emericella nidulans (strain FGSC A4 / ATCC 38163 / CBS 112.46 / NRRL 194 / M139) (Aspergillus nidulans).